The sequence spans 463 residues: Glutamyl-tRNA reductase (463 aa).

Substrate contacts are provided by residues 49–52, S109, 114–116, and Q120; these read TCNR and EQQ. Residue C50 is the Nucleophile of the active site. Residue 196 to 201 participates in NADP(+) binding; the sequence is GAGAMS.

The protein belongs to the glutamyl-tRNA reductase family. Homodimer.

The catalysed reaction is (S)-4-amino-5-oxopentanoate + tRNA(Glu) + NADP(+) = L-glutamyl-tRNA(Glu) + NADPH + H(+). The protein operates within porphyrin-containing compound metabolism; protoporphyrin-IX biosynthesis; 5-aminolevulinate from L-glutamyl-tRNA(Glu): step 1/2. Catalyzes the NADPH-dependent reduction of glutamyl-tRNA(Glu) to glutamate 1-semialdehyde (GSA). The polypeptide is Glutamyl-tRNA reductase (Corynebacterium glutamicum (strain R)).